The following is a 200-amino-acid chain: Eukaryotic translation initiation factor isoform 4E (200 aa).

Positions 1–22 are disordered; it reads MATEAPIEATEVPPASATETVA. Residues 44–49, lysine 76, and 94–95 each bind mRNA; these read QGAAWG and WE. Cysteine 99 and cysteine 138 are oxidised to a cystine. MRNA contacts are provided by residues 145 to 150 and 189 to 192; these read RRSQDK and KRER.

Belongs to the eukaryotic initiation factor 4E family. As to quaternary structure, EIF4F is a multi-subunit complex, the composition of which varies with external and internal environmental conditions. It is composed of at least EIF4A, EIF4E and EIF4G. EIF4E is also known to interact with other partners. In higher plants two isoforms of EIF4F have been identified, named isoform EIF4F and isoform EIF(iso)4F. Isoform EIF4F has subunits p220 and p26, whereas isoform EIF(iso)4F has subunits p82 and p28. (Microbial infection) Interacts with viral genome-linked protein (VPg); this interaction is possible in susceptible hosts but impaired in resistant plants. In terms of processing, according to the redox status, the Cys-99-Cys-138 disulfide bridge may have a role in regulating protein function by affecting its ability to bind capped mRNA. As to expression, expressed ubiquitously in seedlings, roots, leaves, sepals, petals, anthers and dehisced pollen, with highest levels in pollen, maturing anthers and roots. Strongly expressed in susceptible plants but not in resistant ones.

It is found in the cytoplasm. Its subcellular location is the nucleus. Component of the protein complex eIF4F, which is involved in the recognition of the mRNA cap, ATP-dependent unwinding of 5'-terminal secondary structure and recruitment of mRNA to the ribosome. Recognizes and binds the 7-methylguanosine-containing mRNA cap during an early step in the initiation of protein synthesis and facilitates ribosome binding by inducing the unwinding of the mRNAs secondary structures. Key component of recessive resistance to potyviruses. Functionally, (Microbial infection) Susceptibility host factor required for viral infection (e.g. potato virus Y (PVY) and pepper mottle virus (PepMoV)) by recruiting viral RNAs to the host ribosomal complex via an interaction with viral genome-linked protein (VPg). The chain is Eukaryotic translation initiation factor isoform 4E from Nicotiana tabacum (Common tobacco).